Reading from the N-terminus, the 374-residue chain is Protein RecA (374 aa).

Gly66 to Thr73 contacts ATP. Positions Lys326–Ser374 are disordered. The span at Thr338–Ser374 shows a compositional bias: low complexity.

It belongs to the RecA family.

The protein localises to the cytoplasm. In terms of biological role, can catalyze the hydrolysis of ATP in the presence of single-stranded DNA, the ATP-dependent uptake of single-stranded DNA by duplex DNA, and the ATP-dependent hybridization of homologous single-stranded DNAs. It interacts with LexA causing its activation and leading to its autocatalytic cleavage. The protein is Protein RecA of Streptomyces coelicolor (strain ATCC BAA-471 / A3(2) / M145).